The primary structure comprises 857 residues: Bifunctional levopimaradiene synthase, chloroplastic (857 aa).

The N-terminal 33 residues, 1-33, are a transit peptide targeting the chloroplast; that stretch reads MALPSSSLSSQIHTGATTQCIPHFHGSLNAGTS. Lys-257 is a substrate binding site. Mg(2+)-binding residues include Asp-390 and Asp-392. A DXDD motif motif is present at residues 390–393; sequence DIDD. Substrate is bound at residue Lys-477. Mg(2+) is bound by residues Asp-609, Asp-613, Asn-753, Thr-757, and Glu-761. Residues 609–613 carry the DDXXD motif motif; the sequence is DDLYD.

Belongs to the terpene synthase family. Tpsd subfamily. The cofactor is Mg(2+).

The protein resides in the plastid. It is found in the chloroplast. It catalyses the reaction (2E,6E,10E)-geranylgeranyl diphosphate = (+)-copalyl diphosphate. The catalysed reaction is (+)-copalyl diphosphate = abieta-7,13-diene + diphosphate. The enzyme catalyses (+)-copalyl diphosphate = abieta-8(14),12-diene + diphosphate. It carries out the reaction (+)-copalyl diphosphate = neoabietadiene + diphosphate. It participates in terpene metabolism; oleoresin biosynthesis. In terms of biological role, involved in defensive oleoresin formation in conifers in response to insect attack or other injury. Involved in diterpene (C20) olefins biosynthesis. Bifunctional enzyme that catalyzes two sequential cyclizations of geranylgeranyl diphosphate (GGPP) to levopimaradiene. Levopimaradiene is the major products of the enzyme with abietadiene and neoabietadiene. No activity with farnesyl diphosphate (FPP) as substrate. This is Bifunctional levopimaradiene synthase, chloroplastic from Pinus contorta (Shore pine).